The following is a 245-amino-acid chain: Probable phosphatase YcdX (245 aa).

Histidine 7, histidine 9, histidine 15, histidine 40, glutamate 73, histidine 101, histidine 131, aspartate 192, and histidine 194 together coordinate Zn(2+).

The protein belongs to the PHP family. In terms of assembly, homotrimer. Zn(2+) is required as a cofactor.

This chain is Probable phosphatase YcdX, found in Escherichia coli O81 (strain ED1a).